The primary structure comprises 224 residues: uncharacterized protein (224 aa).

The S-adenosyl-L-methionine site is built by glycine 177, isoleucine 197, and leucine 206.

The protein belongs to the class IV-like SAM-binding methyltransferase superfamily. RNA methyltransferase TrmH family.

This is an uncharacterized protein from Archaeoglobus fulgidus (strain ATCC 49558 / DSM 4304 / JCM 9628 / NBRC 100126 / VC-16).